Consider the following 241-residue polypeptide: Ribosomal RNA small subunit methyltransferase J (241 aa).

S-adenosyl-L-methionine is bound by residues 94-95 and D163; that span reads RD.

The protein belongs to the methyltransferase superfamily. RsmJ family.

It localises to the cytoplasm. It carries out the reaction guanosine(1516) in 16S rRNA + S-adenosyl-L-methionine = N(2)-methylguanosine(1516) in 16S rRNA + S-adenosyl-L-homocysteine + H(+). In terms of biological role, specifically methylates the guanosine in position 1516 of 16S rRNA. The protein is Ribosomal RNA small subunit methyltransferase J of Francisella tularensis subsp. novicida (strain U112).